A 152-amino-acid polypeptide reads, in one-letter code: Arginine repressor (152 aa).

Belongs to the ArgR family.

The protein resides in the cytoplasm. The protein operates within amino-acid biosynthesis; L-arginine biosynthesis [regulation]. Regulates arginine biosynthesis genes. In Lactococcus lactis subsp. lactis (strain IL1403) (Streptococcus lactis), this protein is Arginine repressor.